Consider the following 306-residue polypeptide: Natural cytotoxicity triggering receptor 1 (306 aa).

Positions 1-21 (MSSTLRALLCLGLCLSQRISA) are cleaved as a signal peptide. The Extracellular portion of the chain corresponds to 22 to 257 (PKQTLPKPII…WDHTAQNLLR (236 aa)). Ig-like domains follow at residues 42–100 (EKQA…SCIY) and 137–192 (GEKV…RCFG). 2 disulfide bridges follow: Cys49-Cys98 and Cys144-Cys190. Residue Asn216 is glycosylated (N-linked (GlcNAc...) asparagine). A helical membrane pass occupies residues 258-278 (MGLAFLVLVALVCLLVEDWLS). Residues 279 to 306 (RKRTREQASRASTWEGRRRLNKHKDSEE) are Cytoplasmic-facing.

This sequence belongs to the natural cytotoxicity receptor (NCR) family. In terms of assembly, interacts with CD3Z and FCER1G. Expressed in NK cells.

The protein resides in the cell membrane. In terms of biological role, cytotoxicity-activating receptor that may contribute to the increased efficiency of activated natural killer (NK) cells to mediate tumor cell lysis. The chain is Natural cytotoxicity triggering receptor 1 (NCR1) from Macaca fascicularis (Crab-eating macaque).